We begin with the raw amino-acid sequence, 59 residues long: Large ribosomal subunit protein uL30 (59 aa).

The protein belongs to the universal ribosomal protein uL30 family. Part of the 50S ribosomal subunit.

The sequence is that of Large ribosomal subunit protein uL30 from Alteromonas mediterranea (strain DSM 17117 / CIP 110805 / LMG 28347 / Deep ecotype).